Consider the following 252-residue polypeptide: Ribosomal RNA small subunit methyltransferase J (252 aa).

S-adenosyl-L-methionine is bound by residues 101–102 (RD), 117–118 (ER), 153–154 (SS), and aspartate 171.

It belongs to the methyltransferase superfamily. RsmJ family.

The protein localises to the cytoplasm. It catalyses the reaction guanosine(1516) in 16S rRNA + S-adenosyl-L-methionine = N(2)-methylguanosine(1516) in 16S rRNA + S-adenosyl-L-homocysteine + H(+). In terms of biological role, specifically methylates the guanosine in position 1516 of 16S rRNA. The chain is Ribosomal RNA small subunit methyltransferase J from Salmonella typhi.